Reading from the N-terminus, the 124-residue chain is Small ribosomal subunit protein uS12 (124 aa).

A disordered region spans residues 1 to 26; the sequence is MPTISQLVGSERKRLTKKTKSPALKA. 3-methylthioaspartic acid is present on Asp-89. A disordered region spans residues 104–124; it reads TAGVKDRRQSRSKYGAKAPKD.

This sequence belongs to the universal ribosomal protein uS12 family. Part of the 30S ribosomal subunit. Contacts proteins S8 and S17. May interact with IF1 in the 30S initiation complex.

Its function is as follows. With S4 and S5 plays an important role in translational accuracy. Interacts with and stabilizes bases of the 16S rRNA that are involved in tRNA selection in the A site and with the mRNA backbone. Located at the interface of the 30S and 50S subunits, it traverses the body of the 30S subunit contacting proteins on the other side and probably holding the rRNA structure together. The combined cluster of proteins S8, S12 and S17 appears to hold together the shoulder and platform of the 30S subunit. This is Small ribosomal subunit protein uS12 from Prochlorococcus marinus (strain MIT 9215).